The chain runs to 309 residues: Protein FdhE (309 aa).

The protein belongs to the FdhE family.

Its subcellular location is the cytoplasm. Its function is as follows. Necessary for formate dehydrogenase activity. The protein is Protein FdhE of Escherichia coli (strain K12 / MC4100 / BW2952).